Reading from the N-terminus, the 356-residue chain is Glutamine synthetase (356 aa).

The GS beta-grasp domain occupies Ile-26–Gly-105. The GS catalytic domain occupies Phe-112–Ala-356.

The protein belongs to the glutamine synthetase family. Homooctamer.

The protein localises to the cytoplasm. The catalysed reaction is L-glutamate + NH4(+) + ATP = L-glutamine + ADP + phosphate + H(+). This Fusarium solani subsp. phaseoli (Nectria haematococca) protein is Glutamine synthetase (GLN1).